The following is a 78-amino-acid chain: Teretoxin Tsu6.15 (78 aa).

The first 21 residues, 1–21 (MATSGRLLCFCLVLGLVFESL), serve as a signal peptide directing secretion. Positions 22–47 (GYSEARPPRDRKRTVTAKRYDPLAQR) are excised as a propeptide.

Belongs to the teretoxin M (TM) superfamily. Contains 3 disulfide bonds. Expressed by the venom duct.

Its subcellular location is the secreted. The protein is Teretoxin Tsu6.15 of Terebra subulata (Chocolate spotted auger).